The primary structure comprises 106 residues: Foxo1-corepressor (106 aa).

A disordered region spans residues 1–44 (MGGPTRRHQEEGSAECLGGPSTRAAPGPGLRDFHFTTAGPSKAD). Residues 78 to 87 (IGTLYIRLDL) carry the Nuclear export signal motif. At threonine 93 the chain carries Phosphothreonine; by PKA.

Interacts with FOXO1 (via N-terminal domain); the interaction is direct, occurs in a forskolin-independent manner that prevents SIRT1 binding to FOXO1. Interacts with FOXO3. Does not interact with FOXO4. Phosphorylated at Thr-93 by PKA, leading to import into the nucleus. In terms of tissue distribution, expressed in adipocytes. Expressed in brown and white adipose tissue but not in liver. Protein levels in brown and white adipose tissues decrease following fasting (at protein level). Expressed in white and brown adipose tissues. Expressed in adipocytes. Not expressed in liver, skeletal muscle and brain.

The protein resides in the cytoplasm. It localises to the cytosol. Its subcellular location is the nucleus. Regulator of adipocytes that acts by repressing FOXO1 transcriptional activity. Acts by promoting acetylation of FOXO1, both by preventing the interaction between FOXO1 and SIRT1 deacetylase, and by mediating acetyltransferase activity in vitro. Regulates insulin sensitivity and energy metabolism. This chain is Foxo1-corepressor (Fcor), found in Mus musculus (Mouse).